The chain runs to 182 residues: Adenylate kinase isoenzyme 6 homolog (182 aa).

A disordered region spans residues 1 to 20; that stretch reads MATPETRRRPNILVTGSPGT. Positions 19, 21, 22, 23, and 24 each coordinate ATP. An NMPbind region spans residues 39-62; that stretch reads EVSKEVRENNLQGDFDEQYNCHVL. Positions 116 to 126 are LID; that stretch reads SRGYSEFKIKE. Arg-117 contributes to the ATP binding site.

The protein belongs to the adenylate kinase family. AK6 subfamily. Monomer and homodimer. Interacts with small ribosomal subunit protein uS11. Not a structural component of 43S pre-ribosomes, but transiently interacts with them by binding to uS11.

The protein localises to the cytoplasm. Its subcellular location is the nucleus. The catalysed reaction is AMP + ATP = 2 ADP. It catalyses the reaction ATP + H2O = ADP + phosphate + H(+). Functionally, broad-specificity nucleoside monophosphate (NMP) kinase that catalyzes the reversible transfer of the terminal phosphate group between nucleoside triphosphates and monophosphates. Also has ATPase activity. Involved in the late cytoplasmic maturation steps of the 40S ribosomal particles, specifically 18S rRNA maturation. While NMP activity is not required for ribosome maturation, ATPase activity is. Associates transiently with small ribosomal subunit protein uS11. ATP hydrolysis breaks the interaction with uS11. May temporarily remove uS11 from the ribosome to enable a conformational change of the ribosomal RNA that is needed for the final maturation step of the small ribosomal subunit. Its NMP activity may have a role in nuclear energy homeostasis. AMP and dAMP are the preferred substrates, but CMP and TMP are also good substrates. ATP and dATP are the best phosphate donors. This is Adenylate kinase isoenzyme 6 homolog from Caenorhabditis elegans.